The sequence spans 142 residues: MVLSPADKTNVKAAWGKVGAHAGDYGAEALERMFLSFPTTKTYFPHFDLSHGSAQVKGHGKKVADALTNAVAHVDDMPNALSALSDLHAHKLRVDPVNFKLLSHCLLVTLAAHHPAEFTPAVHASLDKFLASVSTVLTSKYR.

Residues 2–142 form the Globin domain; it reads VLSPADKTNV…VSTVLTSKYR (141 aa). H59 provides a ligand contact to O2. H88 contacts heme b.

The protein belongs to the globin family. In terms of assembly, heterotetramer of two alpha chains and two beta chains. In terms of tissue distribution, red blood cells.

Its function is as follows. Involved in oxygen transport from the lung to the various peripheral tissues. In terms of biological role, hemopressin acts as an antagonist peptide of the cannabinoid receptor CNR1. Hemopressin-binding efficiently blocks cannabinoid receptor CNR1 and subsequent signaling. The chain is Hemoglobin subunit alpha-1 (HBA1) from Hylobates lar (Lar gibbon).